The chain runs to 957 residues: Bifunctional glutamine synthetase adenylyltransferase/adenylyl-removing enzyme (957 aa).

Residues Met-1–Glu-449 form an adenylyl removase region. Positions Ser-457 to Glu-957 are adenylyl transferase.

It belongs to the GlnE family. It depends on Mg(2+) as a cofactor.

The catalysed reaction is [glutamine synthetase]-O(4)-(5'-adenylyl)-L-tyrosine + phosphate = [glutamine synthetase]-L-tyrosine + ADP. It carries out the reaction [glutamine synthetase]-L-tyrosine + ATP = [glutamine synthetase]-O(4)-(5'-adenylyl)-L-tyrosine + diphosphate. Involved in the regulation of glutamine synthetase GlnA, a key enzyme in the process to assimilate ammonia. When cellular nitrogen levels are high, the C-terminal adenylyl transferase (AT) inactivates GlnA by covalent transfer of an adenylyl group from ATP to specific tyrosine residue of GlnA, thus reducing its activity. Conversely, when nitrogen levels are low, the N-terminal adenylyl removase (AR) activates GlnA by removing the adenylyl group by phosphorolysis, increasing its activity. The regulatory region of GlnE binds the signal transduction protein PII (GlnB) which indicates the nitrogen status of the cell. This chain is Bifunctional glutamine synthetase adenylyltransferase/adenylyl-removing enzyme, found in Photobacterium profundum (strain SS9).